Reading from the N-terminus, the 336-residue chain is Transmembrane protein 120A (336 aa).

Residues 1–131 lie on the Cytoplasmic side of the membrane; the sequence is MNSPALQDCV…KQSKFAYKDE (131 aa). A CoA-binding site is contributed by Lys129. The chain crosses the membrane as a helical span at residues 132 to 151; that stretch reads YEKFKLYLTMILMVLSFICR. Residues 152–157 are Extracellular-facing; it reads FVLNSR. The helical transmembrane segment at 158-176 threads the bilayer; sequence VTDAVFNFLLVWYYCTLTI. Over 177–189 the chain is Cytoplasmic; it reads RESILINNGSRIK. 2 residues coordinate CoA: Ser186 and Arg187. The helical transmembrane segment at 190-208 threads the bilayer; the sequence is GWWVLNHYISTFLSGVMLT. The Extracellular portion of the chain corresponds to 209–217; the sequence is WPDGLMYQM. Residues 218–239 traverse the membrane as a helical segment; it reads FRNQFLSFSMYQSFVQFLQYYY. Residues Gln236, Tyr239, and Gln240 each coordinate CoA. Residues 240–269 lie on the Cytoplasmic side of the membrane; sequence QSGCLYRLRALGERHNMDLTVEGFQSWMWR. Residues 270–293 traverse the membrane as a helical segment; sequence GLTFLLPFLFFGQFWQLYNAITLF. The Extracellular segment spans residues 294-303; the sequence is KLARHPECKE. Residues 304–329 traverse the membrane as a helical segment; the sequence is WQVIMCGLPFLVHFLGNFFTTLRVVH. Over 330–336 the chain is Cytoplasmic; the sequence is QKFQKQN. Lys331 provides a ligand contact to CoA.

This sequence belongs to the TMEM120 family. In terms of assembly, homodimer.

It is found in the cell membrane. The protein resides in the nucleus inner membrane. Its subcellular location is the endoplasmic reticulum. Functionally, multifunctional protein involved in mechanosensation, and plays an essential role in lipid metabolism. May function as a potential ion channel involved in sensing mechanical stimuli. TMEM120A is structurally similar to a lipid-modifying enzyme, ELOVL7, and contains a bound coenzyme A molecule, which suggests it might function as an enzyme in lipid metabolism. The chain is Transmembrane protein 120A from Xenopus tropicalis (Western clawed frog).